We begin with the raw amino-acid sequence, 57 residues long: Large ribosomal subunit protein bL32c (57 aa).

In terms of assembly, component of the chloroplast large ribosomal subunit (LSU). Mature 70S chloroplast ribosomes of higher plants consist of a small (30S) and a large (50S) subunit. The 30S small subunit contains 1 molecule of ribosomal RNA (16S rRNA) and 24 different proteins. The 50S large subunit contains 3 rRNA molecules (23S, 5S and 4.5S rRNA) and 33 different proteins.

It localises to the plastid. Its subcellular location is the chloroplast. Its function is as follows. Component of the chloroplast ribosome (chloro-ribosome), a dedicated translation machinery responsible for the synthesis of chloroplast genome-encoded proteins, including proteins of the transcription and translation machinery and components of the photosynthetic apparatus. The polypeptide is Large ribosomal subunit protein bL32c (rpl32) (Spinacia oleracea (Spinach)).